Consider the following 447-residue polypeptide: GTPase Era, mitochondrial (447 aa).

A mitochondrion-targeting transit peptide spans 1–18 (MTLRSCETFLRRSLRFST). The 232-residue stretch at 109–340 (KSLKVAIVGS…RYLFVAAKPC (232 aa)) folds into the Era-type G domain. A G1 region spans residues 117–124 (GSPNAGKS). 117-124 (GSPNAGKS) contributes to the GTP binding site. Residues 143–147 (HTTRS) form a G2 region. The interval 164–167 (DTPG) is G3. GTP is bound by residues 164–168 (DTPGL) and 233–236 (NKVD). Positions 233–236 (NKVD) are G4. A G5 region spans residues 318–320 (LSS). Residues 370–447 (LPKEVPYTMT…RLKISVKLRK (78 aa)) enclose the KH type-2 domain.

It belongs to the TRAFAC class TrmE-Era-EngA-EngB-Septin-like GTPase superfamily. Era GTPase family.

It localises to the mitochondrion matrix. Its subcellular location is the mitochondrion inner membrane. Functionally, probable GTPase that plays a role in the mitochondrial ribosomal small subunit assembly. Specifically binds the 12S mitochondrial rRNA (12S mt-rRNA) to a 33 nucleotide section delineating the 3' terminal stem-loop region. May act as a chaperone that protects the 12S mt-rRNA on the 28S mitoribosomal subunit during ribosomal small subunit assembly. This Danio rerio (Zebrafish) protein is GTPase Era, mitochondrial (eral1).